Consider the following 335-residue polypeptide: Ficolin-1 (335 aa).

A signal peptide spans 1–17 (MWWPMLWAFPVLLCLCS). Positions 47-114 (SCPSFPGPPG…TASPLGQKEL (68 aa)) are disordered. The Collagen-like domain maps to 50-88 (SFPGPPGPKGEPGSPAGRGERGLQGSPGKMGPPGSKGEP). Residues 75–88 (SPGKMGPPGSKGEP) are compositionally biased toward low complexity. The Fibrinogen C-terminal domain occupies 117 to 335 (ALCRRGPRSC…KVAEMKIRAS (219 aa)). 2 disulfides stabilise this stretch: Cys119-Cys147 and Cys126-Cys154. Positions 123–162 (PRSCKDLLTRGIFLTGWYTIYLPDCRPLTVLCDMDVDGGG) are a domain; contributes to trimerization. The tract at residues 163 to 251 (WTVFQRRVDG…LTLGQFLEGT (89 aa)) is b domain; contributes to trimerization. Ca(2+) is bound at residue Asp270. The N-linked (GlcNAc...) asparagine glycan is linked to Asn271. Asp272 is a binding site for Ca(2+). A disulfide bridge connects residues Cys279 and Cys292. An a carbohydrate-binding site is contributed by 291–293 (DCH). The segment at 326–335 (KVAEMKIRAS) is p domain.

The protein belongs to the ficolin lectin family. In terms of assembly, homotrimer. Interacts with elastin/ELN. Interacts (via Fibrinogen C-terminal domain) with FFAR2. Interacts with CRP; may regulate monocyte activation by FCN1.

The protein localises to the secreted. The protein resides in the cell membrane. Extracellular lectin functioning as a pattern-recognition receptor in innate immunity. Binds the sugar moieties of pathogen-associated molecular patterns (PAMPs) displayed on microbes and activates the lectin pathway of the complement system. May also activate monocytes through a G protein-coupled receptor, FFAR2, inducing the secretion of interleukin-8/IL-8. Binds preferentially to 9-O-acetylated 2-6-linked sialic acid derivatives and to various glycans containing sialic acid engaged in a 2-3 linkage. This is Ficolin-1 (Fcn1) from Rattus norvegicus (Rat).